The sequence spans 705 residues: Polyribonucleotide nucleotidyltransferase (705 aa).

The Mg(2+) site is built by Asp-487 and Asp-493. The 60-residue stretch at Pro-554–Ile-613 folds into the KH domain. The 69-residue stretch at Gly-623–Lys-691 folds into the S1 motif domain.

This sequence belongs to the polyribonucleotide nucleotidyltransferase family. The cofactor is Mg(2+).

The protein localises to the cytoplasm. It catalyses the reaction RNA(n+1) + phosphate = RNA(n) + a ribonucleoside 5'-diphosphate. Its function is as follows. Involved in mRNA degradation. Catalyzes the phosphorolysis of single-stranded polyribonucleotides processively in the 3'- to 5'-direction. This is Polyribonucleotide nucleotidyltransferase from Oceanobacillus iheyensis (strain DSM 14371 / CIP 107618 / JCM 11309 / KCTC 3954 / HTE831).